We begin with the raw amino-acid sequence, 346 residues long: Elongation factor Ts (346 aa).

Residues 80-83 form an involved in Mg(2+) ion dislocation from EF-Tu region; that stretch reads TDFV.

It belongs to the EF-Ts family.

It is found in the cytoplasm. Functionally, associates with the EF-Tu.GDP complex and induces the exchange of GDP to GTP. It remains bound to the aminoacyl-tRNA.EF-Tu.GTP complex up to the GTP hydrolysis stage on the ribosome. The protein is Elongation factor Ts of Streptococcus pyogenes serotype M18 (strain MGAS8232).